The following is a 345-amino-acid chain: AP2-like ethylene-responsive transcription factor At1g16060 (345 aa).

The segment at 15-62 (TRQSKKTSVENETGDDQSATSVVLKAKRKRRSQPRDAPPQRSSVHRGV) is disordered. 2 consecutive DNA-binding regions (AP2/ERF) follow at residues 58-124 (VHRG…LNFP) and 160-218 (KYRG…TNFD). The segment at 243 to 302 (HSDLSPFIKPNHESDLSQSQSSSEDNDDRKTKLLKSSPLVAEEVIGPSTPPEIAPPRRSF) is disordered.

The protein belongs to the AP2/ERF transcription factor family. AP2 subfamily.

Its subcellular location is the nucleus. Probably acts as a transcriptional activator. Binds to the GCC-box pathogenesis-related promoter element. May be involved in the regulation of gene expression by stress factors and by components of stress signal transduction pathways. The polypeptide is AP2-like ethylene-responsive transcription factor At1g16060 (Arabidopsis thaliana (Mouse-ear cress)).